A 668-amino-acid polypeptide reads, in one-letter code: UvrABC system protein B (668 aa).

The Helicase ATP-binding domain occupies 25–176 (THLQSGHSRQ…DQRQLLRNLA (152 aa)). An ATP-binding site is contributed by 38 to 45 (GATGTGKT). The short motif at 91-114 (YYDYYQPEAYIPVTDTFIEKTASI) is the Beta-hairpin element. One can recognise a Helicase C-terminal domain in the interval 429 to 591 (QVDDLLAEIQ…ITPQPVKKGS (163 aa)). In terms of domain architecture, UVR spans 626–661 (PELITQLEAQMKEAAKNLEFEEAAKYRDRIKNLRSK).

It belongs to the UvrB family. In terms of assembly, forms a heterotetramer with UvrA during the search for lesions. Interacts with UvrC in an incision complex.

Its subcellular location is the cytoplasm. In terms of biological role, the UvrABC repair system catalyzes the recognition and processing of DNA lesions. A damage recognition complex composed of 2 UvrA and 2 UvrB subunits scans DNA for abnormalities. Upon binding of the UvrA(2)B(2) complex to a putative damaged site, the DNA wraps around one UvrB monomer. DNA wrap is dependent on ATP binding by UvrB and probably causes local melting of the DNA helix, facilitating insertion of UvrB beta-hairpin between the DNA strands. Then UvrB probes one DNA strand for the presence of a lesion. If a lesion is found the UvrA subunits dissociate and the UvrB-DNA preincision complex is formed. This complex is subsequently bound by UvrC and the second UvrB is released. If no lesion is found, the DNA wraps around the other UvrB subunit that will check the other stand for damage. In Acaryochloris marina (strain MBIC 11017), this protein is UvrABC system protein B.